A 96-amino-acid polypeptide reads, in one-letter code: MSSQGEPKPEAQFAKRIDPTKEALTKEQLQFIRQVEMAQWKKKTDKLRGRNVATGLAIGAVVLGIYGYTFYSVSQEKIMDEIDEEAKVRVPKTGAN.

The Mitochondrial matrix segment spans residues 1–50 (MSSQGEPKPEAQFAKRIDPTKEALTKEQLQFIRQVEMAQWKKKTDKLRGR). Residues 51–73 (NVATGLAIGAVVLGIYGYTFYSV) traverse the membrane as a helical segment. Topologically, residues 74-96 (SQEKIMDEIDEEAKVRVPKTGAN) are mitochondrial intermembrane.

Belongs to the COA3 family. As to quaternary structure, core component of the MITRAC (mitochondrial translation regulation assembly intermediate of cytochrome c oxidase complex) complex.

It localises to the mitochondrion inner membrane. In terms of biological role, core component of the MITRAC (mitochondrial translation regulation assembly intermediate of cytochrome c oxidase complex) complex, that regulates cytochrome c oxidase assembly. MITRAC complexes regulate both translation of mitochondrial encoded components and assembly of nuclear-encoded components imported in mitochondrion. Required for efficient translation of MT-CO1 and mitochondrial respiratory chain complex IV assembly. The chain is Cytochrome c oxidase assembly factor 3 homolog, mitochondrial (coa3a) from Danio rerio (Zebrafish).